A 456-amino-acid polypeptide reads, in one-letter code: Histidine--tRNA ligase (456 aa).

Belongs to the class-II aminoacyl-tRNA synthetase family. In terms of assembly, homodimer.

It localises to the cytoplasm. The catalysed reaction is tRNA(His) + L-histidine + ATP = L-histidyl-tRNA(His) + AMP + diphosphate + H(+). This is Histidine--tRNA ligase from Cupriavidus taiwanensis (strain DSM 17343 / BCRC 17206 / CCUG 44338 / CIP 107171 / LMG 19424 / R1) (Ralstonia taiwanensis (strain LMG 19424)).